Here is a 444-residue protein sequence, read N- to C-terminus: Ribitol-5-phosphate xylosyltransferase 1 (444 aa).

Topologically, residues 1 to 9 (MRLTRTRLC) are cytoplasmic. The helical; Signal-anchor for type II membrane protein transmembrane segment at 10–30 (SLLVALYCLFSIYAAYHVFFG) threads the bilayer. The Extracellular portion of the chain corresponds to 31–444 (RRRRPLGTTS…ESSFFINNKV (414 aa)). The tract at residues 38-79 (TTSRNSRKAAAAQAKERRGREQSALESEEWNPWEGDEKNEQR) is disordered. Residues 51–60 (AKERRGREQS) are compositionally biased toward basic and acidic residues.

It belongs to the RXYLT1 family. In terms of assembly, forms a complex composed of FKTN/fukutin, FKRP and RXYLT1/TMEM5.

It is found in the golgi apparatus membrane. The catalysed reaction is 3-O-[Rib-ol-P-Rib-ol-P-3-beta-D-GalNAc-(1-&gt;3)-beta-D-GlcNAc-(1-&gt;4)-(O-6-P-alpha-D-Man)]-Thr-[protein] + UDP-alpha-D-xylose = 3-O-[beta-D-Xyl-(1-&gt;4)-Rib-ol-P-Rib-ol-P-3-beta-D-GalNAc-(1-&gt;3)-beta-D-GlcNAc-(1-&gt;4)-(O-6-P-alpha-D-Man)]-Thr-[protein] + UDP + H(+). Its pathway is protein modification; protein glycosylation. Acts as a UDP-D-xylose:ribitol-5-phosphate beta1,4-xylosyltransferase, which catalyzes the transfer of UDP-D-xylose to ribitol 5-phosphate (Rbo5P) to form the Xylbeta1-4Rbo5P linkage on O-mannosyl glycan. Participates in the biosynthesis of the phosphorylated O-mannosyl trisaccharide (N-acetylgalactosamine-beta-3-N-acetylglucosamine-beta-4-(phosphate-6-)mannose), a carbohydrate structure present in alpha-dystroglycan (DAG1), which is required for binding laminin G-like domain-containing extracellular proteins with high affinity. The protein is Ribitol-5-phosphate xylosyltransferase 1 of Mus musculus (Mouse).